Here is a 526-residue protein sequence, read N- to C-terminus: Exodeoxyribonuclease 7 large subunit (526 aa).

Residues 499–526 (AGEDGTPSQAPKKRPARAGEPTKQGSLF) are disordered.

It belongs to the XseA family. Heterooligomer composed of large and small subunits.

Its subcellular location is the cytoplasm. The enzyme catalyses Exonucleolytic cleavage in either 5'- to 3'- or 3'- to 5'-direction to yield nucleoside 5'-phosphates.. Bidirectionally degrades single-stranded DNA into large acid-insoluble oligonucleotides, which are then degraded further into small acid-soluble oligonucleotides. This Sinorhizobium medicae (strain WSM419) (Ensifer medicae) protein is Exodeoxyribonuclease 7 large subunit.